A 196-amino-acid chain; its full sequence is MSDSLNAAALDQLFRTARTQNAFADTPVSQEVLRELYELVKWGPTAANSGPARFVFVTSADGKARLKPALSEGNAAKTLAAPVTVIVAHDEDFHEKLPYLFPHADAKSWFDGPREGRAESAFRNGSLQGAYLILAARALGLDAGPMSGFDNAKVDAAFFAGTPIKSNFLVNLGYGDPAGLFPRSPRLSFDEAARFE.

It belongs to the nitroreductase family. HadB/RutE subfamily. The cofactor is FMN.

The sequence is that of Putative NADH dehydrogenase/NAD(P)H nitroreductase XOO4023 from Xanthomonas oryzae pv. oryzae (strain MAFF 311018).